The sequence spans 262 residues: Type III pantothenate kinase (262 aa).

9-16 lines the ATP pocket; it reads DIGNTNVK. Residues Y103 and 110–113 contribute to the substrate site; that span reads GADR. The active-site Proton acceptor is D112. Residue D134 participates in K(+) binding. T137 is an ATP binding site. T190 contributes to the substrate binding site.

This sequence belongs to the type III pantothenate kinase family. In terms of assembly, homodimer. Requires NH4(+) as cofactor. K(+) is required as a cofactor.

Its subcellular location is the cytoplasm. It catalyses the reaction (R)-pantothenate + ATP = (R)-4'-phosphopantothenate + ADP + H(+). It participates in cofactor biosynthesis; coenzyme A biosynthesis; CoA from (R)-pantothenate: step 1/5. In terms of biological role, catalyzes the phosphorylation of pantothenate (Pan), the first step in CoA biosynthesis. This chain is Type III pantothenate kinase, found in Nitratidesulfovibrio vulgaris (strain ATCC 29579 / DSM 644 / CCUG 34227 / NCIMB 8303 / VKM B-1760 / Hildenborough) (Desulfovibrio vulgaris).